Here is a 127-residue protein sequence, read N- to C-terminus: Aspartate 1-decarboxylase (127 aa).

The active-site Schiff-base intermediate with substrate; via pyruvic acid is Ser25. The residue at position 25 (Ser25) is a Pyruvic acid (Ser). Residue Thr57 participates in substrate binding. Residue Tyr58 is the Proton donor of the active site. Residue 73 to 75 participates in substrate binding; it reads GAA.

It belongs to the PanD family. As to quaternary structure, heterooctamer of four alpha and four beta subunits. It depends on pyruvate as a cofactor. Is synthesized initially as an inactive proenzyme, which is activated by self-cleavage at a specific serine bond to produce a beta-subunit with a hydroxyl group at its C-terminus and an alpha-subunit with a pyruvoyl group at its N-terminus.

Its subcellular location is the cytoplasm. It catalyses the reaction L-aspartate + H(+) = beta-alanine + CO2. The protein operates within cofactor biosynthesis; (R)-pantothenate biosynthesis; beta-alanine from L-aspartate: step 1/1. Its function is as follows. Catalyzes the pyruvoyl-dependent decarboxylation of aspartate to produce beta-alanine. This chain is Aspartate 1-decarboxylase, found in Staphylococcus aureus (strain bovine RF122 / ET3-1).